The following is an 815-amino-acid chain: Cell division cycle protein 48 (815 aa).

Residues 1 to 30 (MNAPSTMTDKKPEVEHLQGENPPKDTYSAE) are disordered. Residues 8–18 (TDKKPEVEHLQ) show a composition bias toward basic and acidic residues. ATP-binding positions include 267 to 273 (PGTGKTL), Asn-368, His-404, and 541 to 546 (GTGKTL). A disordered region spans residues 794 to 815 (DSADSNTNGPSFGNDGADDLYA). Residues 795–804 (SADSNTNGPS) are compositionally biased toward polar residues.

The protein belongs to the AAA ATPase family. As to quaternary structure, component of the ribosome quality control complex (RQC), composed of the E3 ubiquitin ligase rkr1/ltn1, rqc1 and mtr1/rqc2, as well as cdc48 and its ubiquitin-binding cofactors. RQC forms a stable complex with 60S ribosomal subunits. Interacts with ubx2 and ubx3. Interacts with lub1. Interacts with rbd2 (via C-terminal SHP box); the interaction is required for rbd2-mediated cleavage of sre1 and sre2.

It is found in the cytoplasm. Its subcellular location is the nucleus. The catalysed reaction is ATP + H2O = ADP + phosphate + H(+). The first ATP-binding region has low ATPase activity. The second ATP-binding region is responsible for ATPase activity. ATP binding to the first ATP-binding region induces intrinsic activity of the second ATP-binding region. While ATP binding to the first ATP-binding region appears to prevent ATP hydrolysis by the second ATP-binding region, ADP-binding to first region promotes the coordinate and cooperative ATPase cycle of the second ATP-binding region. ATP binding to the first ATP-binding region induces a conformational change, promoting the rotation of the first ATP-binding region relative to the second ATP-binding region in the hexamer. Its function is as follows. ATP-dependent chaperone which probably uses the energy provided by ATP hydrolysis to generate mechanical force to unfold substrate proteins, disassemble protein complexes, and disaggregate protein aggregates. By recruiting and promoting the degradation of ubiquitinated proteins, plays a role in the ubiquitin fusion degradation (UFD) pathway. Has a role in the endoplasmic reticulum-associated degradation (ERAD) pathway which mediates the cytoplasmic elimination of misfolded proteins exported from the ER. Involved in spindle disassembly. Component of the ribosome quality control complex (RQC), a ribosome-associated complex that mediates ubiquitination and extraction of incompletely synthesized nascent chains for proteasomal degradation. CDC48 may provide the mechanical force that dislodges the polyubiquitinated nascent peptides from the exit channel. Required for ribophagy, a process which relocalizes ribosomal particles into the vacuole for degradation in response to starvation. Has a role in substrate recognition mediating rbd2-dependent cleavage of sterol regulatory element-binding protein sre1 and sre2. The protein is Cell division cycle protein 48 of Schizosaccharomyces pombe (strain 972 / ATCC 24843) (Fission yeast).